Here is a 256-residue protein sequence, read N- to C-terminus: Probable histidine-binding protein (256 aa).

Positions 1 to 19 (MKKFLTAFLVAFTGLFLVA) are cleaved as a signal peptide. Cys-20 carries N-palmitoyl cysteine lipidation. A lipid anchor (S-diacylglycerol cysteine) is attached at Cys-20.

The protein belongs to the bacterial solute-binding protein 3 family.

Its subcellular location is the cell membrane. Its function is as follows. Involved in histidine transport. The chain is Probable histidine-binding protein (hisJ) from Campylobacter jejuni subsp. jejuni serotype O:2 (strain ATCC 700819 / NCTC 11168).